A 301-amino-acid chain; its full sequence is Protoheme IX farnesyltransferase 1 (301 aa).

Helical transmembrane passes span 29-49, 51-71, 101-121, 123-143, 150-170, 177-197, 223-243, 244-264, and 275-295; these read VVAL…PHAV, VQPL…AAAL, ALIF…SLVN, LTAW…TAYL, NIVI…TAVT, ALLL…ALAI, CILL…LVGM, CGPV…YKAW, and AMQV…ALLL.

Belongs to the UbiA prenyltransferase family. Protoheme IX farnesyltransferase subfamily.

It localises to the cell inner membrane. The catalysed reaction is heme b + (2E,6E)-farnesyl diphosphate + H2O = Fe(II)-heme o + diphosphate. Its pathway is porphyrin-containing compound metabolism; heme O biosynthesis; heme O from protoheme: step 1/1. Functionally, converts heme B (protoheme IX) to heme O by substitution of the vinyl group on carbon 2 of heme B porphyrin ring with a hydroxyethyl farnesyl side group. The sequence is that of Protoheme IX farnesyltransferase 1 from Shewanella baltica (strain OS185).